The chain runs to 1163 residues: Voltage-gated inwardly rectifying potassium channel KCNH2 (1163 aa).

Residues 1–405 (MPVRRGHVAP…RIHRWTILHY (405 aa)) lie on the Cytoplasmic side of the membrane. The 72-residue stretch at 17 to 88 (TIIRKFEGQS…AAQIAQALLG (72 aa)) folds into the PAS domain. The PAC domain occupies 92–144 (RKVEIAFYRKDGSCFLCLVDVVPVKNEDGAVIMFILNFEVVMEKDMVGSPAHD). The disordered stretch occupies residues 235-286 (VGPASASPVASIPGPHPSPRAQSLNPDASGSSCSLARTRSRESCASVRRASS). Phosphoserine occurs at positions 239 and 245. Residues 254 to 271 (RAQSLNPDASGSSCSLAR) show a composition bias toward polar residues. 4 positions are modified to phosphoserine: Ser-285, Ser-286, Ser-322, and Ser-353. A helical membrane pass occupies residues 406 to 426 (SPFKAVWDWLILLLVIYTAVF). The Extracellular segment spans residues 427-452 (TPYSAAFLLKETEDGSQAPDCGYACQ). Residues 453 to 473 (PLAVVDLLVDIMFIVDILINF) traverse the membrane as a helical segment. Topologically, residues 474-497 (RTTYVNANEEVVSHPGRIAVHYFK) are cytoplasmic. The helical transmembrane segment at 498 to 518 (GWFLIDMVAAIPFDLLIFGSG) threads the bilayer. Over 519–522 (SEEL) the chain is Extracellular. The helical; Voltage-sensor transmembrane segment at 523-543 (IGLLKTARLLRLVRVARKLDR) threads the bilayer. At 544–549 (YSEYGA) the chain is on the cytoplasmic side. A helical membrane pass occupies residues 550-570 (AVLFLLMCTFALIAHWLACIW). The Extracellular portion of the chain corresponds to 571-613 (YAIGNMEQPHMDSHIGWLHNLGDQIGKPYNSSGLGGPSIKDKY). N-linked (GlcNAc...) asparagine glycosylation is present at Asn-600. Residues 614–634 (VTALYFTFSSLTSVGFGNVSP) constitute an intramembrane region (pore-forming). Positions 626-631 (SVGFGN) match the Selectivity filter motif. The Extracellular segment spans residues 635–640 (NTNSEK). A helical membrane pass occupies residues 641 to 661 (IFSICVMLIGSLMYASIFGNV). Residues 662–1163 (SAIIQRLYSG…LHRHGSDPGS (502 aa)) lie on the Cytoplasmic side of the membrane. The interval 744-844 (PFRGATKGCL…IHRDDLLEVL (101 aa)) is cNMP-binding domain. Phosphoserine is present on residues Ser-873 and Ser-876. 3 disordered regions span residues 873–992 (SPSS…NPLS), 1015–1043 (ELPRCPAPAPSLLNIPLSSPGRRSRGDVE), and 1126–1163 (AGAPELPQDGPTRRLSLPGQLGALTSQPLHRHGSDPGS). Residues 885-894 (RQRKRKLSFR) are compositionally biased toward basic residues. Residues 932-943 (GESPSSGPSSPE) show a composition bias toward low complexity. Residue Arg-1018 is modified to Omega-N-methylarginine. Residues 1039 to 1066 (RGDVESRLDALQRQLNRLETRLSADMAT) adopt a coiled-coil conformation. Ser-1141 carries the post-translational modification Phosphoserine.

Belongs to the potassium channel family. H (Eag) (TC 1.A.1.20) subfamily. Kv11.1/KCNH2 sub-subfamily. The potassium channel is probably composed of a homo- or heterotetrameric complex of pore-forming alpha subunits that can associate with modulating beta subunits. Interacts with DNAJB12 and DNAJB14; chaperones DNAJB12 and DNAJB14 promote tetramerization. Heteromultimer with KCNH6/ERG2 and KCNH7/ERG3. Interacts with ALG10B. Forms a stable complex with KCNE1 or KCNE2, and that this heteromultimerization regulates Inward rectifier potassium channel activity. Interacts with CANX. The core-glycosylated, but not the fully glycosylated form interacts with RNF207. Interacts with NDFIP1 and NDFIP2; this interaction decreases the cell membrane expression by targeting KCNH2, through interaction with NEDD4L, for the degradation through the multivesicular bodies (MVBs)-lysosomal pathway. Post-translationally, phosphorylated on serine and threonine residues. Phosphorylation by PKA inhibits ion conduction. Highly expressed in brain and testis, slightly less so in heart, adrenal, retina and thymus. Detected at lower levels in lung, soleus, tibialis, and at very low levels in cornea and lens. A shorter transcript is detected in skeletal muscle. Found in pituitary.

It localises to the cell membrane. It carries out the reaction K(+)(in) = K(+)(out). Its function is as follows. Pore-forming (alpha) subunit of voltage-gated inwardly rectifying potassium channel. Characterized by unusual gating kinetics by producing relatively small outward currents during membrane depolarization and large inward currents during subsequent repolarization which reflect a rapid inactivation during depolarization and quick recovery from inactivation but slow deactivation (closing) during repolarization. Channel properties are modulated by cAMP and subunit assembly. Forms a stable complex with KCNE1 or KCNE2, and that this heteromultimerization regulates inward rectifier potassium channel activity. The protein is Voltage-gated inwardly rectifying potassium channel KCNH2 of Rattus norvegicus (Rat).